Consider the following 171-residue polypeptide: 3-hydroxydecanoyl-[acyl-carrier-protein] dehydratase (171 aa).

Residue histidine 70 is part of the active site.

Belongs to the thioester dehydratase family. FabA subfamily. In terms of assembly, homodimer.

It localises to the cytoplasm. The enzyme catalyses a (3R)-hydroxyacyl-[ACP] = a (2E)-enoyl-[ACP] + H2O. It catalyses the reaction (3R)-hydroxydecanoyl-[ACP] = (2E)-decenoyl-[ACP] + H2O. It carries out the reaction (2E)-decenoyl-[ACP] = (3Z)-decenoyl-[ACP]. It participates in lipid metabolism; fatty acid biosynthesis. Necessary for the introduction of cis unsaturation into fatty acids. Catalyzes the dehydration of (3R)-3-hydroxydecanoyl-ACP to E-(2)-decenoyl-ACP and then its isomerization to Z-(3)-decenoyl-ACP. Can catalyze the dehydratase reaction for beta-hydroxyacyl-ACPs with saturated chain lengths up to 16:0, being most active on intermediate chain length. This is 3-hydroxydecanoyl-[acyl-carrier-protein] dehydratase from Pseudomonas syringae pv. syringae (strain B728a).